The chain runs to 102 residues: Parathymosin (102 aa).

The segment at 1 to 102 is disordered; that stretch reads MSEKSVEAAA…RQKTENGASA (102 aa). The residue at position 2 (S2) is an N-acetylserine. S2 carries the phosphoserine modification. An N6-acetyllysine modification is found at K4. A phosphoserine mark is found at S5 and S13. A compositionally biased stretch (basic and acidic residues) spans 13–37; the sequence is SAKDLKEKKEKVEEKAGRKERKKEV. K15 carries the N6-acetyllysine modification. The span at 38–76 shows a compositional bias: acidic residues; sequence VEEEENGAEEEEEETAEDGEEEDDGDEEDEEEEEEEDEG. T52 bears the Phosphothreonine mark. Position 92 is an N6-acetyllysine (K92).

The protein belongs to the pro/parathymosin family.

In terms of biological role, parathymosin may mediate immune function by blocking the effect of prothymosin alpha which confers resistance to certain opportunistic infections. This chain is Parathymosin (PTMS), found in Bos taurus (Bovine).